Reading from the N-terminus, the 190-residue chain is NADH-quinone oxidoreductase subunit B (190 aa).

[4Fe-4S] cluster contacts are provided by cysteine 67, cysteine 68, cysteine 132, and cysteine 162.

This sequence belongs to the complex I 20 kDa subunit family. NDH-1 is composed of 14 different subunits. Subunits NuoB, C, D, E, F, and G constitute the peripheral sector of the complex. [4Fe-4S] cluster is required as a cofactor.

Its subcellular location is the cell inner membrane. The catalysed reaction is a quinone + NADH + 5 H(+)(in) = a quinol + NAD(+) + 4 H(+)(out). In terms of biological role, NDH-1 shuttles electrons from NADH, via FMN and iron-sulfur (Fe-S) centers, to quinones in the respiratory chain. The immediate electron acceptor for the enzyme in this species is believed to be ubiquinone. Couples the redox reaction to proton translocation (for every two electrons transferred, four hydrogen ions are translocated across the cytoplasmic membrane), and thus conserves the redox energy in a proton gradient. This is NADH-quinone oxidoreductase subunit B from Anaplasma marginale (strain Florida).